Here is a 638-residue protein sequence, read N- to C-terminus: LIM domain kinase 2 (638 aa).

LIM zinc-binding domains are found at residues Cys-12–Asp-63 and Cys-72–Cys-124. The PDZ domain maps to Leu-152–Pro-239. Thr-210 is modified (phosphothreonine). Residues Leu-279–Leu-304 form a disordered region. The span at Arg-286 to Pro-302 shows a compositional bias: low complexity. Phosphoserine occurs at positions 293 and 298. One can recognise a Protein kinase domain in the interval Leu-331 to Leu-608. ATP-binding positions include Leu-337 to Ala-345 and Lys-360. Residue Asp-451 is part of the active site. At Thr-505 the chain carries Phosphothreonine; by ROCK1 and CDC42BP.

It belongs to the protein kinase superfamily. TKL Ser/Thr protein kinase family. Interacts with LIMK2b. In terms of assembly, interacts with LIMK2a. As to quaternary structure, binds ROCK1 and MARF1. Interacts with NISCH. Phosphorylated on serine and/or threonine residues by ROCK1.

It localises to the cytoplasm. Its subcellular location is the cytoskeleton. The protein resides in the spindle. The protein localises to the microtubule organizing center. It is found in the centrosome. It localises to the nucleus. Its subcellular location is the perinuclear region. It catalyses the reaction L-seryl-[protein] + ATP = O-phospho-L-seryl-[protein] + ADP + H(+). The catalysed reaction is L-threonyl-[protein] + ATP = O-phospho-L-threonyl-[protein] + ADP + H(+). Functionally, serine/threonine-protein kinase that plays an essential role in the regulation of actin filament dynamics. Acts downstream of several Rho family GTPase signal transduction pathways. Involved in astral microtubule organization and mitotic spindle orientation during early stages of mitosis by mediating phosphorylation of TPPP. Displays serine/threonine-specific phosphorylation of myelin basic protein and histone (MBP) in vitro. Suppresses ciliogenesis via multiple pathways; phosphorylation of CFL1, suppression of directional trafficking of ciliary vesicles to the ciliary base, and by facilitating YAP1 nuclear localization where it acts as a transcriptional corepressor of the TEAD4 target genes AURKA and PLK1. This Homo sapiens (Human) protein is LIM domain kinase 2 (LIMK2).